The primary structure comprises 331 residues: Probable serine hydrolase (331 aa).

Residues 1–28 are disordered; the sequence is MGQTRVAATTAAQSPAAELSPETNGQTE. Over residues 7-17 the composition is skewed to low complexity; sequence AATTAAQSPAA. One can recognise an AB hydrolase-1 domain in the interval 63-163; that stretch reads PIIALHGWQD…EVEKLINIDI (101 aa). The active site involves serine 138.

This sequence belongs to the AB hydrolase superfamily. In terms of tissue distribution, ubiquitously expressed before embryonic stage 11. At stage 11, expression is concentrated in the foregut and posterior midgut. By stage 15, in gastric caeca, pharynx, posterior spiracles and anterior edge of midgut. At the end of embryogenesis, expression is confined to gastric caeca. During third instar larvae, expressed at low levels in gastric caeca, midgut and hindgut and high level in fat body.

Functionally, may have a role in detoxification and digestion during embryogenesis and larval development. This is Probable serine hydrolase (kraken) from Drosophila melanogaster (Fruit fly).